Consider the following 335-residue polypeptide: Ketol-acid reductoisomerase (NADP(+)) (335 aa).

A KARI N-terminal Rossmann domain is found at 5 to 185; sequence SKIYTDKDSN…GATRAGVIPT (181 aa). Residues 28–31, Ser-56, and 86–89 each bind NADP(+); these read YGSQ and DMVQ. Residue His-111 is part of the active site. An NADP(+)-binding site is contributed by Gly-137. The 146-residue stretch at 186–331 folds into the KARI C-terminal knotted domain; it reads TFKEETETDL…NQLKDLIQKG (146 aa). 4 residues coordinate Mg(2+): Asp-194, Glu-198, Glu-230, and Glu-234. Ser-255 is a binding site for substrate.

The protein belongs to the ketol-acid reductoisomerase family. Mg(2+) is required as a cofactor.

The enzyme catalyses (2R)-2,3-dihydroxy-3-methylbutanoate + NADP(+) = (2S)-2-acetolactate + NADPH + H(+). The catalysed reaction is (2R,3R)-2,3-dihydroxy-3-methylpentanoate + NADP(+) = (S)-2-ethyl-2-hydroxy-3-oxobutanoate + NADPH + H(+). It functions in the pathway amino-acid biosynthesis; L-isoleucine biosynthesis; L-isoleucine from 2-oxobutanoate: step 2/4. The protein operates within amino-acid biosynthesis; L-valine biosynthesis; L-valine from pyruvate: step 2/4. In terms of biological role, involved in the biosynthesis of branched-chain amino acids (BCAA). Catalyzes an alkyl-migration followed by a ketol-acid reduction of (S)-2-acetolactate (S2AL) to yield (R)-2,3-dihydroxy-isovalerate. In the isomerase reaction, S2AL is rearranged via a Mg-dependent methyl migration to produce 3-hydroxy-3-methyl-2-ketobutyrate (HMKB). In the reductase reaction, this 2-ketoacid undergoes a metal-dependent reduction by NADPH to yield (R)-2,3-dihydroxy-isovalerate. In Saccharolobus islandicus (strain M.16.27) (Sulfolobus islandicus), this protein is Ketol-acid reductoisomerase (NADP(+)).